The following is a 173-amino-acid chain: Translationally-controlled tumor protein homolog (173 aa).

A TCTP domain is found at 1 to 173 (MIIFKDMITG…FKHGLEEEKV (173 aa)).

Belongs to the TCTP family. In terms of tissue distribution, expressed by the venom gland.

It localises to the secreted. Venom protein that causes edema, enhances vascular permeability and is likely related to the inflammatory activity of the venom. This is Translationally-controlled tumor protein homolog from Grammostola rosea (Chilean rose tarantula).